A 22-amino-acid polypeptide reads, in one-letter code: Plasticin-TR (22 aa).

This sequence belongs to the frog skin active peptide (FSAP) family. Plasticin subfamily. In terms of assembly, exhibits a propensity to self-association and forms helical oligomers in membrane-mimetic environments. In terms of tissue distribution, expressed by the skin glands.

Its subcellular location is the secreted. It is found in the target cell membrane. Has no antimicrobial activity against Gram-negative bacterium E.coli ATCC 25922, Gram-positive bacterium S.epidermidis ATCC 12228 and against fungus C.albicans ATCC 24433 at concentrations up to 100 uM. Has an anti-inflammatory effect, since it inhibits the production of the pro-inflammatory cytokines TNF-alpha and IL-1 beta. Has high activity of stimulation of insulin release, which may protect the species from being eaten by predators by causing fatal hypoglycemia. Is not cytotoxic to cancer line cells. Does not show hemolysis on mouse erythrocytes. Adopts a mixture of alpha-helical and beta-sheet structures. The protein is Plasticin-TR of Phyllomedusa trinitatis (Trinidad leaf frog).